Here is a 231-residue protein sequence, read N- to C-terminus: Ribosomal RNA small subunit methyltransferase G (231 aa).

S-adenosyl-L-methionine is bound by residues G75, F80, 126 to 127 (AE), and R142.

It belongs to the methyltransferase superfamily. RNA methyltransferase RsmG family.

The protein resides in the cytoplasm. Specifically methylates the N7 position of a guanine in 16S rRNA. The polypeptide is Ribosomal RNA small subunit methyltransferase G (Mycoplasma capricolum subsp. capricolum (strain California kid / ATCC 27343 / NCTC 10154)).